The primary structure comprises 113 residues: Ribulose bisphosphate carboxylase small subunit (113 aa).

The protein belongs to the RuBisCO small chain family. In terms of assembly, heterohexadecamer of 8 large and 8 small subunits.

It is found in the carboxysome. In terms of biological role, ruBisCO catalyzes two reactions: the carboxylation of D-ribulose 1,5-bisphosphate, the primary event in carbon dioxide fixation, as well as the oxidative fragmentation of the pentose substrate in the photorespiration process. Both reactions occur simultaneously and in competition at the same active site. Although the small subunit is not catalytic it is essential for maximal activity. This is Ribulose bisphosphate carboxylase small subunit from Synechococcus sp. (strain WH7803).